The following is a 376-amino-acid chain: Heat-inducible transcription repressor HrcA (376 aa).

It belongs to the HrcA family.

In terms of biological role, negative regulator of class I heat shock genes (grpE-dnaK-dnaJ and groELS operons). Prevents heat-shock induction of these operons. The sequence is that of Heat-inducible transcription repressor HrcA from Chloroflexus aggregans (strain MD-66 / DSM 9485).